A 435-amino-acid polypeptide reads, in one-letter code: tRNA modification GTPase MnmE (435 aa).

(6S)-5-formyl-5,6,7,8-tetrahydrofolate is bound by residues arginine 20, glutamate 77, and lysine 117. A TrmE-type G domain is found at 214–359; it reads GIKVVIVGVP…FLKEIESFCL (146 aa). Residues 224–229, 243–249, and 268–271 each bind GTP; these read NSGKSS, TEEEGTT, and DTAG. 2 residues coordinate Mg(2+): serine 228 and threonine 249. Lysine 435 is a binding site for (6S)-5-formyl-5,6,7,8-tetrahydrofolate.

It belongs to the TRAFAC class TrmE-Era-EngA-EngB-Septin-like GTPase superfamily. TrmE GTPase family. Homodimer. Heterotetramer of two MnmE and two MnmG subunits. It depends on K(+) as a cofactor.

It is found in the cytoplasm. Exhibits a very high intrinsic GTPase hydrolysis rate. Involved in the addition of a carboxymethylaminomethyl (cmnm) group at the wobble position (U34) of certain tRNAs, forming tRNA-cmnm(5)s(2)U34. In Bartonella bacilliformis (strain ATCC 35685 / KC583 / Herrer 020/F12,63), this protein is tRNA modification GTPase MnmE.